The sequence spans 190 residues: Probable nicotinate-nucleotide adenylyltransferase (190 aa).

The protein belongs to the NadD family.

It catalyses the reaction nicotinate beta-D-ribonucleotide + ATP + H(+) = deamido-NAD(+) + diphosphate. Its pathway is cofactor biosynthesis; NAD(+) biosynthesis; deamido-NAD(+) from nicotinate D-ribonucleotide: step 1/1. Its function is as follows. Catalyzes the reversible adenylation of nicotinate mononucleotide (NaMN) to nicotinic acid adenine dinucleotide (NaAD). The protein is Probable nicotinate-nucleotide adenylyltransferase of Borrelia turicatae (strain 91E135).